We begin with the raw amino-acid sequence, 233 residues long: Orotidine 5'-phosphate decarboxylase (233 aa).

Substrate contacts are provided by residues Asp-11, Lys-34, 61–70 (DLKLHDIPNT), Thr-117, Arg-179, Gln-189, Gly-209, and Arg-210. Residue Lys-63 is the Proton donor of the active site.

The protein belongs to the OMP decarboxylase family. Type 1 subfamily. As to quaternary structure, homodimer.

It carries out the reaction orotidine 5'-phosphate + H(+) = UMP + CO2. Its pathway is pyrimidine metabolism; UMP biosynthesis via de novo pathway; UMP from orotate: step 2/2. In terms of biological role, catalyzes the decarboxylation of orotidine 5'-monophosphate (OMP) to uridine 5'-monophosphate (UMP). This Streptococcus agalactiae serotype III (strain NEM316) protein is Orotidine 5'-phosphate decarboxylase.